We begin with the raw amino-acid sequence, 217 residues long: MKPLSPLTLSFLLFVFITTLSLAFSNEDVEQVLDVNGKPIFPGGQYYILPAIRGPPGGGVRLGRTGDLTCPVTVLQDRREVKNGLPVKFVIPGISPGIIFTGTPIEIEYTKKPNCAKSSKWLVFVDNVIQKACVGIGGPENYPGIQTLSGLFKIEKHESGFGYKLGFCIKGSPTCLDVGRFDNDEAGRRLNLTEHESFQVVFVEAEANDAEFIKSVV.

The N-terminal stretch at 1–26 (MKPLSPLTLSFLLFVFITTLSLAFSN) is a signal peptide. 2 disulfides stabilise this stretch: cysteine 70–cysteine 115 and cysteine 168–cysteine 175. N-linked (GlcNAc...) asparagine glycosylation is present at asparagine 191.

It belongs to the protease inhibitor I3 (leguminous Kunitz-type inhibitor) family.

The protein localises to the secreted. Functionally, might act as a protease inhibitor involved in plant defense responses. The sequence is that of Kunitz-type trypsin inhibitor-like 2 protein (PIP20-2) from Pisum sativum (Garden pea).